An 833-amino-acid polypeptide reads, in one-letter code: Leucine--tRNA ligase (833 aa).

A 'HIGH' region motif is present at residues 41-52; the sequence is PYPSGAGLHVGH. Residues 610–614 carry the 'KMSKS' region motif; sequence KMSKS. Residue Lys-613 coordinates ATP.

The protein belongs to the class-I aminoacyl-tRNA synthetase family.

The protein localises to the cytoplasm. It carries out the reaction tRNA(Leu) + L-leucine + ATP = L-leucyl-tRNA(Leu) + AMP + diphosphate. The protein is Leucine--tRNA ligase of Streptococcus uberis (strain ATCC BAA-854 / 0140J).